We begin with the raw amino-acid sequence, 764 residues long: FAST kinase domain-containing protein 5, mitochondrial (764 aa).

A mitochondrion-targeting transit peptide spans 1 to 27 (MAATLKSLKLVRYRAFCSPSAFGAVRS). Serine 95 carries the post-translational modification Phosphoserine. Lysine 507 bears the N6-acetyllysine mark. The 61-residue stretch at 697–757 (LAVQFTNRNQ…RLEKLAFLHE (61 aa)) folds into the RAP domain.

Belongs to the FAST kinase family. In terms of assembly, found in a complex with GRSF1, DDX28, DHX30 and FASTKD2. Associates with the 12S mitochondrial rRNA (12S mt-rRNA). Expression detected in spleen, thymus, testis, ovary, colon, heart, smooth muscle, kidney, brain, lung, liver and white adipose tissue with highest expression in heart, smooth muscle, liver and thyroid.

It is found in the mitochondrion matrix. It localises to the mitochondrion nucleoid. In terms of biological role, plays an important role in the processing of non-canonical mitochondrial mRNA precursors. This is FAST kinase domain-containing protein 5, mitochondrial (FASTKD5) from Homo sapiens (Human).